Consider the following 407-residue polypeptide: Proteasomal ubiquitin receptor ADRM1 (407 aa).

N-acetylthreonine is present on Thr2. The residue at position 15 (Ser15) is a Phosphoserine. Positions 18 to 131 (ASNKYLVEFR…RKVNEYLNNP (114 aa)) constitute a Pru domain. A Glycyl lysine isopeptide (Lys-Gly) (interchain with G-Cter in ubiquitin) cross-link involves residue Lys34. Tyr127 carries the post-translational modification Phosphotyrosine. Ser140 and Ser211 each carry phosphoserine. 2 disordered regions span residues 194 to 259 (LLGS…ASPT) and 379 to 407 (KAMQNNAKPEQKEGDTKDKKDEEEDMSLD). At Thr217 the chain carries Phosphothreonine. Residues 253 to 407 (STAASPTQPI…KDEEEDMSLD (155 aa)) form an interaction with UCHL5 region. Residues 277–391 (PAGPAGGQQV…QNNAKPEQKE (115 aa)) enclose the DEUBAD domain. Positions 387–398 (PEQKEGDTKDKK) are enriched in basic and acidic residues. Ser405 carries the post-translational modification Phosphoserine.

This sequence belongs to the ADRM1 family. In terms of assembly, component of the 19S proteasome regulatory particle complex. The 26S proteasome consists of a 20S core particle (CP) and two 19S regulatory subunits (RP). Interacts with the proteasomal scaffolding protein PSMD1. Interacts with deubiquitinase UCHL5; this interaction activates the auto-inhibited UCHL5 by deoligomerizing it. Interacts with UBQLN2 and ubiquitin. Ubiquitinated by UBE3C in response to proteotoxic stress.

It localises to the cytoplasm. Its subcellular location is the nucleus. Component of the 26S proteasome, a multiprotein complex involved in the ATP-dependent degradation of ubiquitinated proteins. This complex plays a key role in the maintenance of protein homeostasis by removing misfolded or damaged proteins, which could impair cellular functions, and by removing proteins whose functions are no longer required. Therefore, the proteasome participates in numerous cellular processes, including cell cycle progression, apoptosis, or DNA damage repair. Within the complex, functions as a proteasomal ubiquitin receptor. Engages and activates 19S-associated deubiquitinases UCHL5 and PSMD14 during protein degradation. UCHL5 reversibly associate with the 19S regulatory particle whereas PSMD14 is an intrinsic subunit of the proteasome lid subcomplex. The polypeptide is Proteasomal ubiquitin receptor ADRM1 (ADRM1) (Homo sapiens (Human)).